Consider the following 593-residue polypeptide: MSWLFGLNKGQQEPPGVPGFPEPPSPPGGSGDGGDKNKPKDKWSNFDPTGLERAAKAARELDQSRHAKEAINLAKVQEETLQMEQQAKIKEYEAAVEQLKNEQIRVQAEERRKTLNEETKQHQARAQYQDKLARQRYEDQLRQQQLQNEENLRRQEDSVQKQEAMRRATVEHEMELRHKNEMLRIEAEARAQAKVERENADIIREQIRLKAAEHRQTVLESIKTAGTVFGEGFRTFISDWDKVTATVAGLTLLAVGVYTAKNATGVAGRYIEARLGKPSLVRDTSRITVAEAVKHPIKITKRLYSKIQDALEGVILSPRLEERVRDIAIATRNTKANKGLYRNILMYGPPGTGKTLFAKKLAMHSGMDYAIMTGGDVAPMGREGVTAMHKVFDWAGTSKRGLLLFVDEADAFLRKRSTEKISEDLRATLNAFLYRTGEQSNKFMLVLASNQPEQFDWAINDRIDEIVHFDLPGLEERERLVRLYFDKYVLQPASEGKQRLKVAQFDYGKKCSELSKLTEGMSGREISKLGVAWQAAAYASEDGILTEAMIDARVADAIRQHQQKMAWLKAEGKEGAKEIGKNPLQPLLEGTQV.

The disordered stretch occupies residues M1–S64. Over M1–K242 the chain is Mitochondrial intermembrane. A compositionally biased stretch (pro residues) spans P15 to P27. 2 stretches are compositionally biased toward basic and acidic residues: residues G33–S44 and R53–S64. A coiled-coil region spans residues E52–R215. The helical transmembrane segment at V243–A260 threads the bilayer. Topologically, residues K261–V593 are mitochondrial matrix. G348 to T355 is an ATP binding site.

It belongs to the AAA ATPase family. In terms of assembly, can form homooligomers. Homodimer formation at the N-terminus may be regulated by ATP and is required for the interaction with the inner surface of the mitochondrial outer membrane and correct mitochondrial homeostasis.

The protein localises to the mitochondrion inner membrane. The protein resides in the mitochondrion matrix. It localises to the mitochondrion nucleoid. It catalyses the reaction ATP + H2O = ADP + phosphate + H(+). In terms of biological role, essential for mitochondrial network organization, mitochondrial metabolism and cell growth at organism and cellular level. May play an important role in mitochondrial protein synthesis. May also participate in mitochondrial DNA replication. May bind to mitochondrial DNA D-loops and contribute to nucleoid stability. Required for enhanced channeling of cholesterol for hormone-dependent steroidogenesis. Involved in mitochondrial-mediated antiviral innate immunity. Required to protect mitochondria from the PERK-mediated unfolded protein response: specifically inhibits the activity of EIF2AK3/PERK at mitochondria-endoplasmic reticulum contact sites, thereby providing a safe haven for mitochondrial protein translation during endoplasmic reticulum stress. Ability to inhibit EIF2AK3/PERK is independent of its ATPase activity. Also involved in the mitochondrial DNA damage response by promoting signaling between damaged genomes and the mitochondrial membrane, leading to activation of the integrated stress response (ISR). The polypeptide is ATPase family AAA domain-containing protein 3-A (atad3-a) (Xenopus laevis (African clawed frog)).